A 380-amino-acid polypeptide reads, in one-letter code: Enoyl-[acyl-carrier-protein] reductase, mitochondrial (380 aa).

Residues 1–9 (MLPTFKRYM) constitute a mitochondrion transit peptide. The active-site Proton donor is the tyrosine 73. Residues asparagine 157, 185–188 (TSSV), 208–210 (RDR), 283–286 (YGGM), and 308–310 (YWV) contribute to the NADP(+) site. Position 339 is a phosphoserine (serine 339). Lysine 373 lines the NADP(+) pocket.

The protein belongs to the zinc-containing alcohol dehydrogenase family. Quinone oxidoreductase subfamily. Homodimer or in a complex with other proteins. Interacts with ARS1.

It is found in the mitochondrion matrix. The enzyme catalyses a 2,3-saturated acyl-[ACP] + NADP(+) = a (2E)-enoyl-[ACP] + NADPH + H(+). It carries out the reaction (2E,4E)-hexadienoyl-CoA + NADPH + H(+) = (4E)-hexenoyl-CoA + NADP(+). It catalyses the reaction (2E)-hexenoyl-CoA + NADPH + H(+) = hexanoyl-CoA + NADP(+). Its function is as follows. Catalyzes the NADPH-dependent reduction of trans-2-enoyl thioesters in mitochondrial fatty acid synthesis (fatty acid synthesis type II). Fatty acid chain elongation in mitochondria uses acyl carrier protein (ACP) as an acyl group carrier, but the enzyme accepts both ACP and CoA thioesters as substrates in vitro. Required for respiration and the maintenance of the mitochondrial compartment. The sequence is that of Enoyl-[acyl-carrier-protein] reductase, mitochondrial (ETR1) from Saccharomyces cerevisiae (strain ATCC 204508 / S288c) (Baker's yeast).